A 319-amino-acid polypeptide reads, in one-letter code: Cytochrome c biogenesis protein CcsA (319 aa).

A run of 7 helical transmembrane segments spans residues 9–29, 44–64, 71–91, 143–163, 225–245, 259–273, and 286–306; these read ILTH…LITL, GVIG…AYSG, LYES…FPYL, MVLG…LLVI, IISL…VWAN, TWAF…IYLH, and AIVA…VNLL.

It belongs to the CcmF/CycK/Ccl1/NrfE/CcsA family. As to quaternary structure, may interact with Ccs1.

Its subcellular location is the plastid. The protein localises to the chloroplast thylakoid membrane. Functionally, required during biogenesis of c-type cytochromes (cytochrome c6 and cytochrome f) at the step of heme attachment. This is Cytochrome c biogenesis protein CcsA from Oenothera argillicola (Appalachian evening primrose).